Consider the following 723-residue polypeptide: Phenylalanine ammonia-lyase (723 aa).

Tyr-77 functions as the Proton donor/acceptor in the catalytic mechanism. The segment at residues 182–184 is a cross-link (5-imidazolinone (Ala-Gly)); the sequence is ASG. Ser-183 is subject to 2,3-didehydroalanine (Ser). Residues Asn-241, Gln-336, Arg-342, Asn-372, Lys-443, Glu-471, and Asn-474 each coordinate (E)-cinnamate.

Belongs to the PAL/histidase family. Post-translationally, contains an active site 4-methylidene-imidazol-5-one (MIO), which is formed autocatalytically by cyclization and dehydration of residues Ala-Ser-Gly.

The protein resides in the cytoplasm. It carries out the reaction L-phenylalanine = (E)-cinnamate + NH4(+). Its pathway is secondary metabolite biosynthesis. It participates in phenylpropanoid metabolism; trans-cinnamate biosynthesis; trans-cinnamate from L-phenylalanine: step 1/1. Phenylalanine ammonia-lyase; part of the gene cluster that mediates the biosynthesis of squalestatin S1 (SQS1, also known as zaragozic acid A), a heavily oxidized fungal polyketide that offers potent cholesterol lowering activity by targeting squalene synthase (SS). SQS1 is composed of a 2,8-dioxobicyclic[3.2.1]octane-3,4,5-tricarboxyclic acid core that is connected to two lipophilic polyketide arms. These initial steps feature the priming of an unusual benzoic acid starter unit onto the highly reducing polyketide synthase clz14, followed by oxaloacetate extension and product release to generate a tricarboxylic acid containing product. The phenylalanine ammonia lyase (PAL) clz10 and the acyl-CoA ligase clz12 are involved in transforming phenylalanine into benzoyl-CoA. The citrate synthase-like protein clz17 is involved in connecting the C-alpha-carbons of the hexaketide chain and oxaloacetate to afford the tricarboxylic acid unit. The potential hydrolytic enzymes, clz11 and clz13, are in close proximity to pks2 and may participate in product release. On the other side, the tetraketide arm is synthesized by a the squalestatin tetraketide synthase clz2 and enzymatically esterified to the core in the last biosynthetic step, by the acetyltransferase clz6. The biosynthesis of the tetraketide must involve 3 rounds of chain extension. After the first and second rounds methyl-transfer occurs, and in all rounds of extension the ketoreductase and dehydratase are active. The enoyl reductase and C-MeT of clz2 are not active in the final round of extension. The acetyltransferase clz6 appears to have a broad substrate selectivity for its acyl CoA substrate, allowing the in vitro synthesis of novel squalestatins. The biosynthesis of SQS1 requires several oxidative steps likely performed by oxidoreductases clz3, clz15 and clz16. Finally, in support of the identification of the cluster as being responsible for SQS1 production, the cluster contains a gene encoding a putative squalene synthase (SS) clz20, suggesting a likely mechanism for self-resistance. The protein is Phenylalanine ammonia-lyase of Cochliobolus lunatus (Filamentous fungus).